Here is a 454-residue protein sequence, read N- to C-terminus: tRNA-2-methylthio-N(6)-dimethylallyladenosine synthase (454 aa).

Residues 6–122 (RHYHITTFGC…LKDLLESVFD (117 aa)) form the MTTase N-terminal domain. [4Fe-4S] cluster is bound by residues C15, C51, C85, C157, C161, and C164. Residues 143–381 (RDSKVTAWVN…HLGNLKVAER (239 aa)) form the Radical SAM core domain. One can recognise a TRAM domain in the interval 383–447 (QRYFGRIEEV…PFSLTGQPVE (65 aa)).

Belongs to the methylthiotransferase family. MiaB subfamily. Monomer. [4Fe-4S] cluster is required as a cofactor.

It localises to the cytoplasm. It catalyses the reaction N(6)-dimethylallyladenosine(37) in tRNA + (sulfur carrier)-SH + AH2 + 2 S-adenosyl-L-methionine = 2-methylsulfanyl-N(6)-dimethylallyladenosine(37) in tRNA + (sulfur carrier)-H + 5'-deoxyadenosine + L-methionine + A + S-adenosyl-L-homocysteine + 2 H(+). Its function is as follows. Catalyzes the methylthiolation of N6-(dimethylallyl)adenosine (i(6)A), leading to the formation of 2-methylthio-N6-(dimethylallyl)adenosine (ms(2)i(6)A) at position 37 in tRNAs that read codons beginning with uridine. This is tRNA-2-methylthio-N(6)-dimethylallyladenosine synthase from Nostoc punctiforme (strain ATCC 29133 / PCC 73102).